The primary structure comprises 635 residues: Probable serine/threonine-protein kinase DDB_G0270146 (635 aa).

The Protein kinase domain maps to 77–329 (VISDIAIGKG…AKELLSHPWI (253 aa)). ATP-binding positions include 83–91 (IGKGAFATV) and K106. D199 functions as the Proton acceptor in the catalytic mechanism. Low complexity predominate over residues 360–392 (SLLSNSSGGDDSVTDSDLSISNQSSRSSSFLLD). The interval 360–405 (SLLSNSSGGDDSVTDSDLSISNQSSRSSSFLLDDGGGGGGSKNHTV) is disordered. 2 coiled-coil regions span residues 417-456 (IEFN…KYRE) and 536-585 (KKAL…KDSS). Residues 540–582 (EAQKRREKEQEKLKEQEKLKEKKKEKDIKKEKDKKDKKDKQLK) are compositionally biased toward basic and acidic residues. The tract at residues 540–635 (EAQKRREKEQ…GRSSSKIFNE (96 aa)) is disordered. Over residues 583-598 (DSSSSTTTTNSTPSTP) the composition is skewed to low complexity. Over residues 626–635 (GRSSSKIFNE) the composition is skewed to polar residues.

It belongs to the protein kinase superfamily. STE Ser/Thr protein kinase family. Mg(2+) serves as cofactor.

It carries out the reaction L-seryl-[protein] + ATP = O-phospho-L-seryl-[protein] + ADP + H(+). The enzyme catalyses L-threonyl-[protein] + ATP = O-phospho-L-threonyl-[protein] + ADP + H(+). The sequence is that of Probable serine/threonine-protein kinase DDB_G0270146 from Dictyostelium discoideum (Social amoeba).